The following is a 485-amino-acid chain: Ribosomal protein uS12 methylthiotransferase RimO (485 aa).

Positions 19–135 (VKVGFISLGC…IGEVVAGILA (117 aa)) constitute an MTTase N-terminal domain. The [4Fe-4S] cluster site is built by Cys28, Cys64, Cys98, Cys172, Cys176, and Cys179. In terms of domain architecture, Radical SAM core spans 158–387 (ATPGYTAYLK…MEVQQEIARR (230 aa)). The region spanning 390-461 (QLQVGRELEV…DYDLLGEATE (72 aa)) is the TRAM domain.

The protein belongs to the methylthiotransferase family. RimO subfamily. [4Fe-4S] cluster serves as cofactor.

The protein resides in the cytoplasm. It carries out the reaction L-aspartate(89)-[ribosomal protein uS12]-hydrogen + (sulfur carrier)-SH + AH2 + 2 S-adenosyl-L-methionine = 3-methylsulfanyl-L-aspartate(89)-[ribosomal protein uS12]-hydrogen + (sulfur carrier)-H + 5'-deoxyadenosine + L-methionine + A + S-adenosyl-L-homocysteine + 2 H(+). In terms of biological role, catalyzes the methylthiolation of an aspartic acid residue of ribosomal protein uS12. The sequence is that of Ribosomal protein uS12 methylthiotransferase RimO from Symbiobacterium thermophilum (strain DSM 24528 / JCM 14929 / IAM 14863 / T).